A 208-amino-acid polypeptide reads, in one-letter code: Ribosomal RNA large subunit methyltransferase E (208 aa).

5 residues coordinate S-adenosyl-L-methionine: Gly63, Trp65, Asp83, Asp99, and Asp124. The Proton acceptor role is filled by Lys164.

The protein belongs to the class I-like SAM-binding methyltransferase superfamily. RNA methyltransferase RlmE family.

The protein localises to the cytoplasm. The enzyme catalyses uridine(2552) in 23S rRNA + S-adenosyl-L-methionine = 2'-O-methyluridine(2552) in 23S rRNA + S-adenosyl-L-homocysteine + H(+). Its function is as follows. Specifically methylates the uridine in position 2552 of 23S rRNA at the 2'-O position of the ribose in the fully assembled 50S ribosomal subunit. The chain is Ribosomal RNA large subunit methyltransferase E from Salmonella paratyphi A (strain ATCC 9150 / SARB42).